Here is a 106-residue protein sequence, read N- to C-terminus: Immunoglobulin lambda constant 7 (106 aa).

The region spanning 7-101 (PSVTLFPPSS…EGSTVEKTVA (95 aa)) is the Ig-like domain. A disulfide bond links cysteine 28 and cysteine 87.

Immunoglobulins are composed of two identical heavy chains and two identical light chains; disulfide-linked.

Its subcellular location is the secreted. The protein resides in the cell membrane. Functionally, constant region of immunoglobulin light chains. Immunoglobulins, also known as antibodies, are membrane-bound or secreted glycoproteins produced by B lymphocytes. In the recognition phase of humoral immunity, the membrane-bound immunoglobulins serve as receptors which, upon binding of a specific antigen, trigger the clonal expansion and differentiation of B lymphocytes into immunoglobulins-secreting plasma cells. Secreted immunoglobulins mediate the effector phase of humoral immunity, which results in the elimination of bound antigens. The antigen binding site is formed by the variable domain of one heavy chain, together with that of its associated light chain. Thus, each immunoglobulin has two antigen binding sites with remarkable affinity for a particular antigen. The variable domains are assembled by a process called V-(D)-J rearrangement and can then be subjected to somatic hypermutations which, after exposure to antigen and selection, allow affinity maturation for a particular antigen. This chain is Immunoglobulin lambda constant 7, found in Homo sapiens (Human).